The chain runs to 108 residues: Ig kappa chain V-VI region NQ2-6.1 (108 aa).

The framework-1 stretch occupies residues 1-23; sequence QILLTQSPAIMSASPGQKVTMTC. Cys-23 and Cys-87 are oxidised to a cystine. The complementarity-determining-1 stretch occupies residues 24–33; it reads SASSSVSYMY. The interval 34–48 is framework-2; sequence WYQQKPGSSPRLLIY. A complementarity-determining-2 region spans residues 49-55; it reads DTSNLAS. Residues 56–87 form a framework-3 region; the sequence is GVPVRFSGSGSATSYSLTITRMQAEDAATYYC. The tract at residues 88–98 is complementarity-determining-3; that stretch reads QQWSSYPPMLT. Positions 99-108 are framework-4; the sequence is FGAGTKLELK.

This Mus musculus (Mouse) protein is Ig kappa chain V-VI region NQ2-6.1.